Consider the following 308-residue polypeptide: Lipoyl synthase (308 aa).

Residues Cys-51, Cys-56, Cys-62, Cys-77, Cys-81, Cys-84, and Ser-290 each coordinate [4Fe-4S] cluster. The Radical SAM core domain maps to 63-279 (WSKRHATFMI…ETIAKSKGFL (217 aa)).

This sequence belongs to the radical SAM superfamily. Lipoyl synthase family. The cofactor is [4Fe-4S] cluster.

The protein localises to the cytoplasm. It catalyses the reaction [[Fe-S] cluster scaffold protein carrying a second [4Fe-4S](2+) cluster] + N(6)-octanoyl-L-lysyl-[protein] + 2 oxidized [2Fe-2S]-[ferredoxin] + 2 S-adenosyl-L-methionine + 4 H(+) = [[Fe-S] cluster scaffold protein] + N(6)-[(R)-dihydrolipoyl]-L-lysyl-[protein] + 4 Fe(3+) + 2 hydrogen sulfide + 2 5'-deoxyadenosine + 2 L-methionine + 2 reduced [2Fe-2S]-[ferredoxin]. Its pathway is protein modification; protein lipoylation via endogenous pathway; protein N(6)-(lipoyl)lysine from octanoyl-[acyl-carrier-protein]: step 2/2. In terms of biological role, catalyzes the radical-mediated insertion of two sulfur atoms into the C-6 and C-8 positions of the octanoyl moiety bound to the lipoyl domains of lipoate-dependent enzymes, thereby converting the octanoylated domains into lipoylated derivatives. This is Lipoyl synthase from Pelagibacter ubique (strain HTCC1062).